Consider the following 130-residue polypeptide: Small ribosomal subunit protein uS9 (130 aa).

This sequence belongs to the universal ribosomal protein uS9 family.

The polypeptide is Small ribosomal subunit protein uS9 (Bordetella parapertussis (strain 12822 / ATCC BAA-587 / NCTC 13253)).